The primary structure comprises 481 residues: Cobyric acid synthase (481 aa).

Residues 248–435 (ALTVAWLAFS…LHGMFGADGF (188 aa)) enclose the GATase cobBQ-type domain. The Nucleophile role is filled by cysteine 330. Histidine 427 is an active-site residue.

This sequence belongs to the CobB/CobQ family. CobQ subfamily.

Its pathway is cofactor biosynthesis; adenosylcobalamin biosynthesis. In terms of biological role, catalyzes amidations at positions B, D, E, and G on adenosylcobyrinic A,C-diamide. NH(2) groups are provided by glutamine, and one molecule of ATP is hydrogenolyzed for each amidation. This chain is Cobyric acid synthase, found in Cereibacter sphaeroides (strain ATCC 17023 / DSM 158 / JCM 6121 / CCUG 31486 / LMG 2827 / NBRC 12203 / NCIMB 8253 / ATH 2.4.1.) (Rhodobacter sphaeroides).